We begin with the raw amino-acid sequence, 125 residues long: Holo-[acyl-carrier-protein] synthase (125 aa).

Mg(2+) contacts are provided by Asp-7 and Glu-56.

This sequence belongs to the P-Pant transferase superfamily. AcpS family. Requires Mg(2+) as cofactor.

The protein resides in the cytoplasm. The enzyme catalyses apo-[ACP] + CoA = holo-[ACP] + adenosine 3',5'-bisphosphate + H(+). Transfers the 4'-phosphopantetheine moiety from coenzyme A to a Ser of acyl-carrier-protein. The protein is Holo-[acyl-carrier-protein] synthase of Chlamydia muridarum (strain MoPn / Nigg).